Here is a 360-residue protein sequence, read N- to C-terminus: Peptide chain release factor 1 (360 aa).

Gln-235 carries the post-translational modification N5-methylglutamine. The interval 284–312 (AKRQQAEASTRRNLLGSGDRSDRNRTYNF) is disordered.

The protein belongs to the prokaryotic/mitochondrial release factor family. Methylated by PrmC. Methylation increases the termination efficiency of RF1.

The protein localises to the cytoplasm. In terms of biological role, peptide chain release factor 1 directs the termination of translation in response to the peptide chain termination codons UAG and UAA. The chain is Peptide chain release factor 1 from Escherichia coli O81 (strain ED1a).